Consider the following 288-residue polypeptide: MPSVCHTSPIEKIIQQGHRIQNDSLIPSKRTKLAHTELTAHYATEDSHVEKHFLHNGSNFDGIDNVRYQNQPSPLTFITPNNTVDSSDWVPQFSSMKIDDSLEFSSEYKRLYSNYESQQRLNSSRQHLPFKNCMIRKTSCTYPPQKTLRQQRQGNRDNPTDAFQFDAEFQVLEREIQKERYEPITRRDEKWFDQDQSELQRIATDIVKCCTPPPSSASSSSTLSSSVESKLSESKFIQLMRNISSGDVTLKKNADGNSASELFSSNNGELVGNRHIFVKDEIHKDILD.

Cysteine 5 participates in a covalent cross-link: Glycyl cysteine thioester (Cys-Gly) (interchain with G-Cter in ubiquitin).

It belongs to the peroxin-21 family. Interacts with PEX7. Interacts with PEX13. Interacts with SES1. Post-translationally, monoubiquitinated at Cys-5; acts as a signal for PEX21 extraction and is required for proper export from peroxisomes and recycling.

The protein localises to the cytoplasm. The protein resides in the cytosol. It is found in the peroxisome. In terms of biological role, receptor that mediates peroxisomal import of proteins containing a C-terminal PTS2-type peroxisomal targeting signal via its interaction with PEX7. Interaction with PEX7 only takes place when PEX7 is associated with cargo proteins containing a PTS2 peroxisomal targeting signal. PEX7 along with PTS2-containing cargo proteins are then translocated through the PEX13-PEX14 docking complex together with PEX21. Acts as an activator of the seryl-tRNA synthetase SES1 by increasing its binding to tRNA. The chain is Peroxisomal protein PEX21 (PEX21) from Saccharomyces cerevisiae (strain ATCC 204508 / S288c) (Baker's yeast).